An 86-amino-acid chain; its full sequence is Small ribosomal subunit protein bS16 (86 aa).

Belongs to the bacterial ribosomal protein bS16 family.

The chain is Small ribosomal subunit protein bS16 from Leptothrix cholodnii (strain ATCC 51168 / LMG 8142 / SP-6) (Leptothrix discophora (strain SP-6)).